A 657-amino-acid chain; its full sequence is Pentatricopeptide repeat-containing protein CRR2, chloroplastic (657 aa).

Residues 1–51 (MFLSHPPQVIQPTYHTVNFLPRSPLKPPSCSVALNNPSISSGAGAKISNNQ) constitute a chloroplast transit peptide. PPR repeat units lie at residues 45–75 (AKIS…ESSP), 76–110 (SQQT…GSDQ), 111–141 (DPFL…TRKR), 142–176 (TIYV…GVES), 177–215 (DRFT…GYSS), 216–246 (HVYI…MPVR), 247–277 (NVVS…MMRE), 284–318 (NSVT…GLDS), 319–349 (ILPV…MHDR), 350–384 (DVVS…GASP), 385–420 (TPVT…GIKP), and 421–451 (QIEH…MRTE). A type E motif region spans residues 456–531 (VWGSLLGSCR…LPGRCWMEVR (76 aa)). The tract at residues 532 to 562 (RKMYSFVSVDEFNPLMEQIHAFLVKLAEDMK) is type E(+) motif. The tract at residues 563 to 657 (EKGYIPQTKG…NGVCSCGDYW (95 aa)) is type DYW motif.

This sequence belongs to the PPR family. PCMP-H subfamily.

The protein resides in the plastid. It localises to the chloroplast. Its function is as follows. Required for the intergenic processing between chloroplast rsp7 and ndhB transcripts. Necessary for chloroplast NADH dehydrogenase-like (NDH) complex-dependent cyclic electron transport around PSI (CET). This chain is Pentatricopeptide repeat-containing protein CRR2, chloroplastic, found in Arabidopsis thaliana (Mouse-ear cress).